We begin with the raw amino-acid sequence, 291 residues long: N-acetylmannosamine kinase (291 aa).

Residues 5-12 (AIDIGGTK) and 132-139 (GVGGGVVS) contribute to the ATP site. Zn(2+) is bound by residues His156, Cys166, Cys168, and Cys173.

The protein belongs to the ROK (NagC/XylR) family. NanK subfamily. Homodimer.

The enzyme catalyses an N-acyl-D-mannosamine + ATP = an N-acyl-D-mannosamine 6-phosphate + ADP + H(+). The protein operates within amino-sugar metabolism; N-acetylneuraminate degradation; D-fructose 6-phosphate from N-acetylneuraminate: step 2/5. Functionally, catalyzes the phosphorylation of N-acetylmannosamine (ManNAc) to ManNAc-6-P. The sequence is that of N-acetylmannosamine kinase (nanK1) from Escherichia coli O6:H1 (strain CFT073 / ATCC 700928 / UPEC).